Reading from the N-terminus, the 214-residue chain is Probable transaldolase 1 (214 aa).

Lysine 83 serves as the catalytic Schiff-base intermediate with substrate.

This sequence belongs to the transaldolase family. Type 3B subfamily.

The protein resides in the cytoplasm. It carries out the reaction D-sedoheptulose 7-phosphate + D-glyceraldehyde 3-phosphate = D-erythrose 4-phosphate + beta-D-fructose 6-phosphate. Its pathway is carbohydrate degradation; pentose phosphate pathway; D-glyceraldehyde 3-phosphate and beta-D-fructose 6-phosphate from D-ribose 5-phosphate and D-xylulose 5-phosphate (non-oxidative stage): step 2/3. In terms of biological role, transaldolase is important for the balance of metabolites in the pentose-phosphate pathway. This Listeria monocytogenes serotype 4b (strain F2365) protein is Probable transaldolase 1.